A 385-amino-acid polypeptide reads, in one-letter code: Cyclin-A3-2 (385 aa).

The segment at 1-110 (MADKENSTPA…STSTASPSSG (110 aa)) is disordered. Composition is skewed to low complexity over residues 7–41 (STPASAARLTRSSAAAGAQAKRSAAAGVADGGAPP), 74–88 (PSSKQPEPAAEAAAP), and 96–110 (PVSSASTSTASPSSG).

The protein belongs to the cyclin family. Cyclin AB subfamily.

The protein is Cyclin-A3-2 (CYCA3-2) of Oryza sativa subsp. japonica (Rice).